We begin with the raw amino-acid sequence, 147 residues long: uncharacterized protein (147 aa).

A helical membrane pass occupies residues 63 to 79 (LFIVACSAVFATIAYIN).

Belongs to the FUN14 family.

It is found in the membrane. This is an uncharacterized protein from Schizosaccharomyces pombe (strain 972 / ATCC 24843) (Fission yeast).